We begin with the raw amino-acid sequence, 237 residues long: Phosphoribosylaminoimidazole-succinocarboxamide synthase (237 aa).

The protein belongs to the SAICAR synthetase family.

It catalyses the reaction 5-amino-1-(5-phospho-D-ribosyl)imidazole-4-carboxylate + L-aspartate + ATP = (2S)-2-[5-amino-1-(5-phospho-beta-D-ribosyl)imidazole-4-carboxamido]succinate + ADP + phosphate + 2 H(+). Its pathway is purine metabolism; IMP biosynthesis via de novo pathway; 5-amino-1-(5-phospho-D-ribosyl)imidazole-4-carboxamide from 5-amino-1-(5-phospho-D-ribosyl)imidazole-4-carboxylate: step 1/2. This is Phosphoribosylaminoimidazole-succinocarboxamide synthase from Methanosarcina mazei (strain ATCC BAA-159 / DSM 3647 / Goe1 / Go1 / JCM 11833 / OCM 88) (Methanosarcina frisia).